The primary structure comprises 166 residues: Urease accessory protein UreE (166 aa).

Belongs to the UreE family.

Its subcellular location is the cytoplasm. Its function is as follows. Involved in urease metallocenter assembly. Binds nickel. Probably functions as a nickel donor during metallocenter assembly. This chain is Urease accessory protein UreE, found in Pseudomonas savastanoi pv. phaseolicola (strain 1448A / Race 6) (Pseudomonas syringae pv. phaseolicola (strain 1448A / Race 6)).